The following is a 305-amino-acid chain: Probable G-protein coupled receptor 141 (305 aa).

Over 1-22 the chain is Extracellular; it reads MPGHNTSRNSSCDPIVTPHLIS. N-linked (GlcNAc...) asparagine glycosylation is found at Asn5 and Asn9. Residues 23 to 43 form a helical membrane-spanning segment; that stretch reads LYFIVLIGGLVGVISILFLLV. Topologically, residues 44–50 are cytoplasmic; the sequence is KMNTRSV. The chain crosses the membrane as a helical span at residues 51 to 71; sequence TTMAVINLVVVHSVFLLTVPF. The Extracellular portion of the chain corresponds to 72–89; it reads RLTYLIKKTWMFGLPFCK. Residues 90 to 110 traverse the membrane as a helical segment; it reads FVSAMLHIHMYLTFLFYVVIL. Residues 111–131 lie on the Cytoplasmic side of the membrane; that stretch reads VTRYLIFFKCKDKVEFYRKLH. A helical membrane pass occupies residues 132–152; that stretch reads AVAASAGMWTLVIVIVVPLVV. Residues 153 to 183 lie on the Extracellular side of the membrane; it reads SRYGIHEEYNEEHCFKFHKELAYTYVKIINY. Residues 184–204 traverse the membrane as a helical segment; sequence MIVIFVIAVAVILLVFQVFII. The Cytoplasmic portion of the chain corresponds to 205-227; the sequence is MLMVQKLRHSLLSHQEFWAQLKN. Residues 228-248 traverse the membrane as a helical segment; that stretch reads LFFIGVILVCFLPYQFFRIYY. Residues 249 to 267 lie on the Extracellular side of the membrane; sequence LNVVTHSNACNSKVAFYNE. A helical transmembrane segment spans residues 268–288; that stretch reads IFLSVTAISCYDLLLFVFGGS. The Cytoplasmic portion of the chain corresponds to 289-305; it reads HWFKQKIIGLWNCVLCR.

Belongs to the G-protein coupled receptor 1 family.

It is found in the cell membrane. Functionally, orphan receptor. The sequence is that of Probable G-protein coupled receptor 141 (GPR141) from Homo sapiens (Human).